A 211-amino-acid polypeptide reads, in one-letter code: MSARRPFSKWALLALLFVTLVAIDQWTKYLAVERLTTLFERTGAETLGERLAGFLEHQHLEPISTDPYYVWRPVWRMNYVENPGAAWGLFRGHSEAFRNGFFTLVSLGAVAFILHYYRKLRAEQRYLQVALALVLSGAVGNFLDRLARGYVIDFIEWYWWNRPDIRWPTFNIADSLIVVGVALLVLHPGSGKAAQKAGADAEGDRRASTGG.

The next 3 membrane-spanning stretches (helical) occupy residues L12 to V32, A96 to Y116, and L127 to A147. Catalysis depends on residues D153 and D174. The helical transmembrane segment at W167 to H187 threads the bilayer.

This sequence belongs to the peptidase A8 family.

Its subcellular location is the cell inner membrane. It carries out the reaction Release of signal peptides from bacterial membrane prolipoproteins. Hydrolyzes -Xaa-Yaa-Zaa-|-(S,diacylglyceryl)Cys-, in which Xaa is hydrophobic (preferably Leu), and Yaa (Ala or Ser) and Zaa (Gly or Ala) have small, neutral side chains.. Its pathway is protein modification; lipoprotein biosynthesis (signal peptide cleavage). Its function is as follows. This protein specifically catalyzes the removal of signal peptides from prolipoproteins. The protein is Lipoprotein signal peptidase of Anaeromyxobacter sp. (strain Fw109-5).